The primary structure comprises 319 residues: Coiled-coil domain-containing protein 149 (319 aa).

Coiled-coil stretches lie at residues methionine 1–serine 199 and isoleucine 259–serine 286. Residues valine 298–valine 318 form a helical membrane-spanning segment.

This sequence belongs to the CCDC149 family.

The protein localises to the membrane. This is Coiled-coil domain-containing protein 149 (CCDC149) from Bos taurus (Bovine).